The sequence spans 492 residues: MAALGSLPTLPEGLTYDDVLLIPQRSPVRSRKAVNTSTRLSRNIHLKIPIVASNMDTVCEDKTAVTMAREGGIGILHRFCSIEEQCAMVRKVKRAQSFLIEDPRMILPSATKAEALEELNWSGRKGGVSCLMVVDDFTSRRLCGVLSKSDLIFATDSALVETLMTPVSRTVVSTNTAITLEEAREVMRTKRTSNIPLLGPKGELLYLITQSDILKLTGNRNATLDSRGRLIVGAAIGVKKEDHKRAAALVDAGADVLVVDIAHGHSDLCIDMVKALKVNPLTNKVDIIAGNIATAEAAQDLIDAGADGLKIGVGPGSICITRLVAGSGVPQLSAVMDCARVAKKHGVPCIADGGVKTAGDICKAIAAGADTVMLGNMLAGTDEAPGRVLVKDGKKVKIIRGMAGFGANISKAEREKRLDEDVFNDLVPEGVEGSVPCKGPLAPILKQLVGGLRSGISYCGSHSIADMQQRARFVRMSGAGLRESGSHDISKL.

NADP(+) contacts are provided by residues 30 to 31 (SR) and R78. CBS domains follow at residues 99 to 162 (LIED…LVET) and 164 to 223 (MTPV…RNAT). Residues 260 to 262 (DIA) and 313 to 314 (VG) contribute to the NADP(+) site. K(+)-binding residues include G314, G316, and C319. The active-site Thioimidate intermediate is C319. T321 serves as the catalytic Proton donor/acceptor. A K(+)-binding site is contributed by R322. Residues 352–354 (DGG), 375–376 (GN), and 401–403 (GMA) contribute to the GMP site. NADP(+)-binding positions include M402 and 454 to 457 (SGIS). The short motif at 490-492 (SKL) is the Microbody targeting signal element.

This sequence belongs to the IMPDH/GMPR family. GuaC type 1 subfamily. In terms of assembly, homotetramer.

It is found in the glycosome. The enzyme catalyses IMP + NH4(+) + NADP(+) = GMP + NADPH + 2 H(+). With respect to regulation, activated by GTP and inhibited by XMP and the IMP analogs allopurinol nucleotide and thiopurinol nucleotide. In terms of biological role, catalyzes the irreversible NADPH-dependent deamination of GMP to IMP. It functions in the conversion of nucleobase, nucleoside and nucleotide derivatives of G to A nucleotides, and in maintaining the intracellular balance of A and G nucleotides. The chain is GMP reductase from Leishmania donovani.